A 491-amino-acid chain; its full sequence is Glutamine synthetase (491 aa).

Positions 23–111 (NNVRQVLCAF…MFGNVYEAWG (89 aa)) constitute a GS beta-grasp domain. The 373-residue stretch at 119 to 491 (PRGYVAKRYE…PWEFMKYFDI (373 aa)) folds into the GS catalytic domain. Mg(2+) contacts are provided by Glu-143 and Glu-145. Glu-225 serves as a coordination point for ATP. 2 residues coordinate Mg(2+): Glu-230 and Glu-238. L-glutamate-binding positions include 282–283 (NA) and Ala-283. His-287 contributes to the Mg(2+) binding site. ATP is bound by residues 289–291 (HQS) and Ser-291. L-glutamate is bound by residues Arg-344, Glu-350, and Arg-362. Positions 362 and 367 each coordinate ATP. Glu-381 is a binding site for Mg(2+). Arg-383 serves as a coordination point for L-glutamate.

Belongs to the glutamine synthetase family. As to quaternary structure, oligomer of 12 subunits arranged in the form of two hexagons. Mg(2+) serves as cofactor.

It is found in the cytoplasm. It carries out the reaction L-glutamate + NH4(+) + ATP = L-glutamine + ADP + phosphate + H(+). In terms of biological role, probably involved in nitrogen metabolism via ammonium assimilation. Catalyzes the ATP-dependent biosynthesis of glutamine from glutamate and ammonia. Beta-glutamate is a much poorer substrate than alpha-glutamate. This chain is Glutamine synthetase, found in Archaeoglobus fulgidus (strain ATCC 49558 / DSM 4304 / JCM 9628 / NBRC 100126 / VC-16).